A 143-amino-acid polypeptide reads, in one-letter code: Period circadian protein (143 aa).

The disordered stretch occupies residues 25 to 130 (NSKPVTAPTQ…GPSLAADNSI (106 aa)). Composition is skewed to low complexity over residues 71–93 (SGNC…ITGT) and 114–126 (GGAA…SLAA).

Forms a heterodimer with timeless (TIM); the complex then translocates into the nucleus. Phosphorylated with a circadian rhythmicity, probably by the double-time protein (dbt). Phosphorylation could be implicated in the stability of per monomer and in the formation of heterodimer per-tim.

Its subcellular location is the nucleus. The protein resides in the cytoplasm. It is found in the perinuclear region. Its function is as follows. Essential for biological clock functions. Determines the period length of circadian and ultradian rhythms; an increase in PER dosage leads to shortened circadian rhythms and a decrease leads to lengthened circadian rhythms. Essential for the circadian rhythmicity of locomotor activity, eclosion behavior, and for the rhythmic component of the male courtship song that originates in the thoracic nervous system. The biological cycle depends on the rhythmic formation and nuclear localization of the TIM-PER complex. Light induces the degradation of TIM, which promotes elimination of PER. Nuclear activity of the heterodimer coordinatively regulates PER and TIM transcription through a negative feedback loop. Behaves as a negative element in circadian transcriptional loop. Does not appear to bind DNA, suggesting indirect transcriptional inhibition. This chain is Period circadian protein (per), found in Drosophila picticornis (Fruit fly).